The sequence spans 141 residues: Endoribonuclease YbeY (141 aa).

Residues histidine 105, histidine 109, and aspartate 115 each contribute to the Zn(2+) site.

This sequence belongs to the endoribonuclease YbeY family. It depends on Zn(2+) as a cofactor.

It localises to the cytoplasm. Single strand-specific metallo-endoribonuclease involved in late-stage 70S ribosome quality control and in maturation of the 3' terminus of the 16S rRNA. In Chloroherpeton thalassium (strain ATCC 35110 / GB-78), this protein is Endoribonuclease YbeY.